We begin with the raw amino-acid sequence, 672 residues long: MDLAALRAKTPDHWKLATAIRVLAIDAVQAANSGHPGMPMGMADVATVLFRNHLKFDAKAPNWADRDRFVLSAGHGSMLLYALLHLTGYEQATLDEVKNFRQWGARMAGHPEYGHLEGVETTTGPLGQGISTAVGMAIAEKSMAARFGKKLVDHKIWVIAGDGCLMEGISQEAIGLAGKQELDNLIVLWDNNNITIDGRVTVSDVTDQKARFAASGWDVLSCDGHDAEDIDRALTAAKKAKRPVLVDCKTLIGFGSPNKADSYAVHGAPLGDAEIKLTREAYGWEHGPFVIPAEIKAEWEAIGAKGAAERAEWEARLAALPAGKRAEFERQMARGVAPKLAGAIRAFKKAQSEAAPKVATRKASEMVLAAVNPVVPETIGGSADLTGSNLTKTSDIEDFMPGNHKGRYMRYGIREHAMAAAMNGMWLHGGVRPYGGTFFCFTDYARGAMRLSSLMGVPTVYVMTHDSIGLGEDGPTHQPVEHLAICRATPNTWTFRPADVIETAEAWELALSSERTPSVLALSRQNLPTLRTKHEAKNLTAKGAYVIAEAEGKRQAILMATGSEVEIALKARALLQAEAIGTRVVSMPCMELFAAQDEAYRKRILPAGGVRVAVEAAIRQPWDRWLLGERGMERKAGFVGMEGFGASAPAERLYAEFGITPEAIAAKVKSLL.

Substrate is bound at residue His-35. Thiamine diphosphate contacts are provided by residues His-75 and 124-126; that span reads GPL. Mg(2+) is bound at residue Asp-162. 2 residues coordinate thiamine diphosphate: Gly-163 and Asn-192. The Mg(2+) site is built by Asn-192 and Ile-194. Residues His-266, Arg-361, and Ser-388 each coordinate substrate. His-266 is a thiamine diphosphate binding site. The active-site Proton donor is Glu-415. Residue Phe-441 participates in thiamine diphosphate binding. The substrate site is built by His-465, Asp-473, and Arg-524.

This sequence belongs to the transketolase family. As to quaternary structure, homodimer. Mg(2+) is required as a cofactor. It depends on Ca(2+) as a cofactor. Mn(2+) serves as cofactor. Requires Co(2+) as cofactor. The cofactor is thiamine diphosphate.

The enzyme catalyses D-sedoheptulose 7-phosphate + D-glyceraldehyde 3-phosphate = aldehydo-D-ribose 5-phosphate + D-xylulose 5-phosphate. The protein operates within carbohydrate biosynthesis; Calvin cycle. Its pathway is carbohydrate degradation; pentose phosphate pathway. Its function is as follows. Catalyzes the transfer of a two-carbon ketol group from a ketose donor to an aldose acceptor, via a covalent intermediate with the cofactor thiamine pyrophosphate. This is Transketolase (tktA) from Rhodobacter capsulatus (strain ATCC BAA-309 / NBRC 16581 / SB1003).